The primary structure comprises 69 residues: Large ribosomal subunit protein uL29 (69 aa).

Belongs to the universal ribosomal protein uL29 family.

The sequence is that of Large ribosomal subunit protein uL29 from Staphylococcus aureus (strain Mu3 / ATCC 700698).